The primary structure comprises 370 residues: Glutamate 5-kinase (370 aa).

Lys17 provides a ligand contact to ATP. Substrate contacts are provided by Ser57, Asp144, and Asn156. ATP is bound by residues 176–177 (SD) and 220–226 (TGGMVSK). Residues 282–360 (SGTLTLDDGA…SDLPAEMRRP (79 aa)) enclose the PUA domain.

This sequence belongs to the glutamate 5-kinase family.

Its subcellular location is the cytoplasm. It carries out the reaction L-glutamate + ATP = L-glutamyl 5-phosphate + ADP. Its pathway is amino-acid biosynthesis; L-proline biosynthesis; L-glutamate 5-semialdehyde from L-glutamate: step 1/2. Functionally, catalyzes the transfer of a phosphate group to glutamate to form L-glutamate 5-phosphate. The chain is Glutamate 5-kinase from Mycolicibacterium gilvum (strain PYR-GCK) (Mycobacterium gilvum (strain PYR-GCK)).